A 514-amino-acid polypeptide reads, in one-letter code: tRNA-2-methylthio-N(6)-dimethylallyladenosine synthase (514 aa).

The segment at 1–21 (MNEEQRKASSVDVLAERDKKA) is disordered. One can recognise an MTTase N-terminal domain in the interval 68 to 186 (RTFLIKTYGC…LPEILEEAYL (119 aa)). Residues C77, C113, C147, C223, C227, and C230 each contribute to the [4Fe-4S] cluster site. Residues 209–440 (REGNIKAWVN…KKVGHYSQIA (232 aa)) enclose the Radical SAM core domain. The 64-residue stretch at 442-505 (SKYEGQTVTV…QYSLNGSFVK (64 aa)) folds into the TRAM domain.

It belongs to the methylthiotransferase family. MiaB subfamily. As to quaternary structure, monomer. [4Fe-4S] cluster serves as cofactor.

It localises to the cytoplasm. It carries out the reaction N(6)-dimethylallyladenosine(37) in tRNA + (sulfur carrier)-SH + AH2 + 2 S-adenosyl-L-methionine = 2-methylsulfanyl-N(6)-dimethylallyladenosine(37) in tRNA + (sulfur carrier)-H + 5'-deoxyadenosine + L-methionine + A + S-adenosyl-L-homocysteine + 2 H(+). Catalyzes the methylthiolation of N6-(dimethylallyl)adenosine (i(6)A), leading to the formation of 2-methylthio-N6-(dimethylallyl)adenosine (ms(2)i(6)A) at position 37 in tRNAs that read codons beginning with uridine. This Staphylococcus aureus (strain MRSA252) protein is tRNA-2-methylthio-N(6)-dimethylallyladenosine synthase.